A 793-amino-acid chain; its full sequence is DnaJ homolog subfamily C member 10 (793 aa).

An N-terminal signal peptide occupies residues Met1–Thr32. The 66-residue stretch at Asn35–Gly100 folds into the J domain. Residues Glu130–His232 enclose the Thioredoxin 1 domain. Cysteines 158 and 161 form a disulfide. Trxb stretches follow at residues Thr235 to Phe350 and Pro348 to Phe463. 3 Thioredoxin domains span residues His454–Leu553, Ser557–Leu665, and Ala671–Tyr776. Cys480 and Cys483 are disulfide-bonded. Asn530 carries N-linked (GlcNAc...) asparagine glycosylation. 2 disulfide bridges follow: Cys588–Cys591 and Cys700–Cys703. The Prevents secretion from ER motif lies at Lys790–Leu793.

In terms of assembly, interacts with HSPA5 (via its J domain). Interacts with EDEM1.

It is found in the endoplasmic reticulum lumen. Its function is as follows. Endoplasmic reticulum disulfide reductase involved both in the correct folding of proteins and degradation of misfolded proteins. Required for efficient folding of proteins in the endoplasmic reticulum by catalyzing the removal of non-native disulfide bonds formed during the folding of proteins, such as LDLR. Also involved in endoplasmic reticulum-associated degradation (ERAD) by reducing incorrect disulfide bonds in misfolded glycoproteins recognized by EDEM1. Interaction with HSPA5 is required its activity, not for the disulfide reductase activity, but to facilitate the release of DNAJC10 from its substrate. Promotes apoptotic signaling pathway in response to endoplasmic reticulum stress. In Rattus norvegicus (Rat), this protein is DnaJ homolog subfamily C member 10 (Dnajc10).